Reading from the N-terminus, the 356-residue chain is Heat-inducible transcription repressor HrcA (356 aa).

The protein belongs to the HrcA family.

In terms of biological role, negative regulator of class I heat shock genes (grpE-dnaK-dnaJ and groELS operons). Prevents heat-shock induction of these operons. This Chlorobaculum tepidum (strain ATCC 49652 / DSM 12025 / NBRC 103806 / TLS) (Chlorobium tepidum) protein is Heat-inducible transcription repressor HrcA.